The chain runs to 147 residues: 3-dehydroquinate dehydratase (147 aa).

The active-site Proton acceptor is the Tyr-22. The substrate site is built by Asn-76, His-82, and Asp-89. His-102 (proton donor) is an active-site residue. Residues 103–104 (IS) and Arg-113 each bind substrate.

This sequence belongs to the type-II 3-dehydroquinase family. As to quaternary structure, homododecamer.

It carries out the reaction 3-dehydroquinate = 3-dehydroshikimate + H2O. It functions in the pathway metabolic intermediate biosynthesis; chorismate biosynthesis; chorismate from D-erythrose 4-phosphate and phosphoenolpyruvate: step 3/7. Its function is as follows. Catalyzes a trans-dehydration via an enolate intermediate. This is 3-dehydroquinate dehydratase from Fusobacterium nucleatum subsp. nucleatum (strain ATCC 25586 / DSM 15643 / BCRC 10681 / CIP 101130 / JCM 8532 / KCTC 2640 / LMG 13131 / VPI 4355).